Consider the following 115-residue polypeptide: U31-theraphotoxin-Cg1a (115 aa).

A signal peptide spans 1–18 (MKLCVIIIASLMVASVSG). A propeptide spanning residues 19–51 (RLRKIKGTELDKKMLLEKLGHGMDIRFEETPRA) is cleaved from the precursor. 4 cysteine pairs are disulfide-bonded: cysteine 52–cysteine 67, cysteine 60–cysteine 73, cysteine 64–cysteine 113, and cysteine 66–cysteine 86.

The protein belongs to the neurotoxin 03 (Tx2) family. 02 subfamily. In terms of tissue distribution, expressed by the venom gland.

The protein resides in the secreted. Functionally, probable ion channel inhibitor. The chain is U31-theraphotoxin-Cg1a from Chilobrachys guangxiensis (Chinese earth tiger tarantula).